A 947-amino-acid polypeptide reads, in one-letter code: Protocadherin alpha-4 (947 aa).

The signal sequence occupies residues 1–29 (MEFSWGSGQESQRLLLSFLLLAIWEAGNS). Cadherin domains are found at residues 30–133 (QIHY…PPRF), 134–242 (PTTQ…APVF), 243–350 (DRSL…VPEL), 351–455 (EFKS…APVF), 456–565 (AQPE…APTL), and 573–681 (SGGI…APSR). Residues 30–697 (QIHYSIPEEA…HSEASLVDVN (668 aa)) are Extracellular-facing. An intrachain disulfide couples cysteine 96 to cysteine 102. Asparagine 257 and asparagine 265 each carry an N-linked (GlcNAc...) asparagine glycan. Residue threonine 438 is glycosylated (O-linked (Man) threonine). 2 O-linked (Man) serine glycosylation sites follow: serine 440 and serine 442. Asparagine 548 carries an N-linked (GlcNAc...) asparagine glycan. A helical membrane pass occupies residues 698-718 (VYLIIAICAVSSLLVLTLLLY). Topologically, residues 719–947 (TALRCSTVPS…GNSTTDNSDQ (229 aa)) are cytoplasmic. 6 PXXP repeats span residues 734 to 737 (PPKP), 774 to 777 (PSLS), 796 to 799 (PRQP), 829 to 832 (PGGP), 870 to 873 (PGNP), and 888 to 891 (PGSP). A 6 X 4 AA repeats of P-X-X-P region spans residues 734 to 891 (PPKPVMVCSS…PDKFIIPGSP (158 aa)). The required for interaction with FYN stretch occupies residues 738 to 947 (VMVCSSAVGS…GNSTTDNSDQ (210 aa)). 2 disordered regions span residues 761–805 (GEYP…DWRY) and 824–853 (ILRA…EVSP). Residues 891–947 (PAIISIRQEPANNQIDKSDFITFGKKEETKKKKKKKKGNKTQEKKEKGNSTTDNSDQ) form a disordered region. Basic and acidic residues predominate over residues 906–920 (DKSDFITFGKKEETK).

Forms homodimers in trans (molecules expressed by two different cells). Forms promiscuous heterodimers in cis (at the plasma membrane of the same cell) with other protocadherins. Interacts with FYN. As to expression, detected in brain throughout embryonic development. Detected in adult brain, in particular in cerebellum and forebrain.

The protein resides in the cell membrane. In terms of biological role, calcium-dependent cell-adhesion protein involved in cells self-recognition and non-self discrimination. Thereby, it is involved in the establishment and maintenance of specific neuronal connections in the brain. This chain is Protocadherin alpha-4, found in Mus musculus (Mouse).